The primary structure comprises 122 residues: Large ribosomal subunit protein uL14c (122 aa).

It belongs to the universal ribosomal protein uL14 family. As to quaternary structure, part of the 50S ribosomal subunit.

The protein resides in the plastid. Its subcellular location is the chloroplast. In terms of biological role, binds to 23S rRNA. The protein is Large ribosomal subunit protein uL14c of Chlorella vulgaris (Green alga).